Here is a 266-residue protein sequence, read N- to C-terminus: Non-structural maintenance of chromosomes element 1 homolog (266 aa).

The interaction with NSMCE3 stretch occupies residues Met1–Ala102. The RING-type; atypical zinc-finger motif lies at Cys191–Asn232. The disordered stretch occupies residues Glu246–His266. Ser251 carries the phosphoserine modification. A compositionally biased stretch (basic residues) spans Ser256 to His266.

The protein belongs to the NSE1 family. Component of the SMC5-SMC6 complex which consists at least of SMC5, SMC6, NSMCE2, NSMCE1, NSMCE4A or EID3 and NSMCE3. NSMCE1, NSMCE4A or EID3 and NSMCE3 probably form a subcomplex that bridges the head domains of the SMC5-SMC6 heterodimer. Interacts with NSMCE3. Interacts with MAGEF1. Ubiquitinated.

It localises to the nucleus. Its subcellular location is the chromosome. The protein localises to the telomere. It carries out the reaction S-ubiquitinyl-[E2 ubiquitin-conjugating enzyme]-L-cysteine + [acceptor protein]-L-lysine = [E2 ubiquitin-conjugating enzyme]-L-cysteine + N(6)-ubiquitinyl-[acceptor protein]-L-lysine.. In terms of biological role, RING-type zinc finger-containing E3 ubiquitin ligase that assembles with melanoma antigen protein (MAGE) to catalyze the direct transfer of ubiquitin from E2 ubiquitin-conjugating enzyme to a specific substrate. Within MAGE-RING ubiquitin ligase complex, MAGE stimulates and specifies ubiquitin ligase activity likely through recruitment and/or stabilization of the E2 ubiquitin-conjugating enzyme at the E3:substrate complex. Involved in maintenance of genome integrity, DNA damage response and DNA repair. NSMCE3/MAGEG1 and NSMCE1 ubiquitin ligase are components of SMC5-SMC6 complex and may positively regulate homologous recombination-mediated DNA repair. MAGEF1-NSMCE1 ubiquitin ligase promotes proteasomal degradation of MMS19, a key component of the cytosolic iron-sulfur protein assembly (CIA) machinery. Down-regulation of MMS19 impairs the activity of several DNA repair and metabolism enzymes such as ERCC2/XPD, FANCJ, RTEL1 and POLD1 that require iron-sulfur clusters as cofactors. This chain is Non-structural maintenance of chromosomes element 1 homolog, found in Homo sapiens (Human).